The following is a 228-amino-acid chain: 2-C-methyl-D-erythritol 4-phosphate cytidylyltransferase (228 aa).

This sequence belongs to the IspD/TarI cytidylyltransferase family. IspD subfamily.

It catalyses the reaction 2-C-methyl-D-erythritol 4-phosphate + CTP + H(+) = 4-CDP-2-C-methyl-D-erythritol + diphosphate. It functions in the pathway isoprenoid biosynthesis; isopentenyl diphosphate biosynthesis via DXP pathway; isopentenyl diphosphate from 1-deoxy-D-xylulose 5-phosphate: step 2/6. Catalyzes the formation of 4-diphosphocytidyl-2-C-methyl-D-erythritol from CTP and 2-C-methyl-D-erythritol 4-phosphate (MEP). The protein is 2-C-methyl-D-erythritol 4-phosphate cytidylyltransferase of Geobacillus kaustophilus (strain HTA426).